The following is a 356-amino-acid chain: Photosystem II protein D1 (356 aa).

3 consecutive transmembrane segments (helical) span residues 29–46 (YVGW…TATT), 118–133 (HFLI…QWEL), and 142–156 (WICV…AATA). H118 serves as a coordination point for chlorophyll a. Y126 contacts pheophytin a. [CaMn4O5] cluster-binding residues include D170 and E189. Residues 197-218 (FHMLGVAGVFGGSLFSAMHGSL) traverse the membrane as a helical segment. H198 contacts chlorophyll a. Residues H215 and 264-265 (SF) each bind a quinone. Fe cation is bound at residue H215. H272 provides a ligand contact to Fe cation. The helical transmembrane segment at 274–288 (FLGAWPVIGIWFTAM) threads the bilayer. 4 residues coordinate [CaMn4O5] cluster: H332, E333, D342, and A344. Residues 345–356 (SAEPVSAPVING) constitute a propeptide that is removed on maturation.

Belongs to the reaction center PufL/M/PsbA/D family. PSII is composed of 1 copy each of membrane proteins PsbA, PsbB, PsbC, PsbD, PsbE, PsbF, PsbH, PsbI, PsbJ, PsbK, PsbL, PsbM, PsbT, PsbX, PsbY, PsbZ, Psb30/Ycf12, peripheral proteins PsbO, CyanoQ (PsbQ), PsbU, PsbV and a large number of cofactors. It forms dimeric complexes. The D1/D2 heterodimer binds P680, chlorophylls that are the primary electron donor of PSII, and subsequent electron acceptors. It shares a non-heme iron and each subunit binds pheophytin, quinone, additional chlorophylls, carotenoids and lipids. D1 provides most of the ligands for the Mn4-Ca-O5 cluster of the oxygen-evolving complex (OEC). There is also a Cl(-1) ion associated with D1 and D2, which is required for oxygen evolution. The PSII complex binds additional chlorophylls, carotenoids and specific lipids. serves as cofactor. Post-translationally, tyr-161 forms a radical intermediate that is referred to as redox-active TyrZ, YZ or Y-Z. In terms of processing, C-terminally processed by CtpA; processing is essential to allow assembly of the oxygen-evolving complex and thus photosynthetic growth.

It localises to the cellular thylakoid membrane. The enzyme catalyses 2 a plastoquinone + 4 hnu + 2 H2O = 2 a plastoquinol + O2. Photosystem II (PSII) is a light-driven water:plastoquinone oxidoreductase that uses light energy to abstract electrons from H(2)O, generating O(2) and a proton gradient subsequently used for ATP formation. It consists of a core antenna complex that captures photons, and an electron transfer chain that converts photonic excitation into a charge separation. The D1/D2 (PsbA/PsbD) reaction center heterodimer binds P680, the primary electron donor of PSII as well as several subsequent electron acceptors. The protein is Photosystem II protein D1 of Crocosphaera subtropica (strain ATCC 51142 / BH68) (Cyanothece sp. (strain ATCC 51142)).